A 442-amino-acid polypeptide reads, in one-letter code: 3-phosphoshikimate 1-carboxyvinyltransferase (442 aa).

3-phosphoshikimate contacts are provided by lysine 25, serine 26, and arginine 30. Phosphoenolpyruvate is bound at residue lysine 25. Positions 96 and 124 each coordinate phosphoenolpyruvate. 3-phosphoshikimate is bound by residues serine 171, serine 172, glutamine 173, serine 203, aspartate 325, and lysine 352. Glutamine 173 provides a ligand contact to phosphoenolpyruvate. The active-site Proton acceptor is the aspartate 325. 3 residues coordinate phosphoenolpyruvate: arginine 356, arginine 400, and lysine 425.

It belongs to the EPSP synthase family. Monomer.

It localises to the cytoplasm. The catalysed reaction is 3-phosphoshikimate + phosphoenolpyruvate = 5-O-(1-carboxyvinyl)-3-phosphoshikimate + phosphate. It functions in the pathway metabolic intermediate biosynthesis; chorismate biosynthesis; chorismate from D-erythrose 4-phosphate and phosphoenolpyruvate: step 6/7. Functionally, catalyzes the transfer of the enolpyruvyl moiety of phosphoenolpyruvate (PEP) to the 5-hydroxyl of shikimate-3-phosphate (S3P) to produce enolpyruvyl shikimate-3-phosphate and inorganic phosphate. In Bordetella parapertussis (strain 12822 / ATCC BAA-587 / NCTC 13253), this protein is 3-phosphoshikimate 1-carboxyvinyltransferase.